An 84-amino-acid chain; its full sequence is Large ribosomal subunit protein bL31B (84 aa).

It belongs to the bacterial ribosomal protein bL31 family. Type B subfamily. In terms of assembly, part of the 50S ribosomal subunit.

In terms of biological role, binds the 23S rRNA. The polypeptide is Large ribosomal subunit protein bL31B (Rhodococcus jostii (strain RHA1)).